The primary structure comprises 388 residues: Chaperone protein DnaJ (388 aa).

One can recognise a J domain in the interval 5-70 (DYYTTLNISN…KKRNLYDQYG (66 aa)). The CR-type zinc-finger motif lies at 135-213 (GIKKEIRIPK…CFGQGRIKKS (79 aa)). Zn(2+) contacts are provided by cysteine 148, cysteine 151, cysteine 165, cysteine 168, cysteine 187, cysteine 190, cysteine 201, and cysteine 204. CXXCXGXG motif repeat units follow at residues 148–155 (CQSCYGYG), 165–172 (CTSCNGHG), 187–194 (CSTCRGTG), and 201–208 (CKICFGQG).

It belongs to the DnaJ family. Homodimer. Zn(2+) is required as a cofactor.

The protein resides in the cytoplasm. Its function is as follows. Participates actively in the response to hyperosmotic and heat shock by preventing the aggregation of stress-denatured proteins and by disaggregating proteins, also in an autonomous, DnaK-independent fashion. Unfolded proteins bind initially to DnaJ; upon interaction with the DnaJ-bound protein, DnaK hydrolyzes its bound ATP, resulting in the formation of a stable complex. GrpE releases ADP from DnaK; ATP binding to DnaK triggers the release of the substrate protein, thus completing the reaction cycle. Several rounds of ATP-dependent interactions between DnaJ, DnaK and GrpE are required for fully efficient folding. Also involved, together with DnaK and GrpE, in the DNA replication of plasmids through activation of initiation proteins. This is Chaperone protein DnaJ from Buchnera aphidicola subsp. Cinara cedri (strain Cc).